The primary structure comprises 339 residues: Glycerol-3-phosphate dehydrogenase [NAD(P)+] (339 aa).

Ser15, Tyr16, His36, and Lys110 together coordinate NADPH. Sn-glycerol 3-phosphate-binding residues include Lys110, Gly139, and Thr141. Ala143 is an NADPH binding site. Sn-glycerol 3-phosphate is bound by residues Lys195, Asp248, Ser258, Arg259, and Asn260. Catalysis depends on Lys195, which acts as the Proton acceptor. NADPH is bound at residue Arg259. 2 residues coordinate NADPH: Val283 and Glu285.

It belongs to the NAD-dependent glycerol-3-phosphate dehydrogenase family.

Its subcellular location is the cytoplasm. It catalyses the reaction sn-glycerol 3-phosphate + NAD(+) = dihydroxyacetone phosphate + NADH + H(+). The enzyme catalyses sn-glycerol 3-phosphate + NADP(+) = dihydroxyacetone phosphate + NADPH + H(+). It participates in membrane lipid metabolism; glycerophospholipid metabolism. In terms of biological role, catalyzes the reduction of the glycolytic intermediate dihydroxyacetone phosphate (DHAP) to sn-glycerol 3-phosphate (G3P), the key precursor for phospholipid synthesis. In Pectobacterium carotovorum subsp. carotovorum (strain PC1), this protein is Glycerol-3-phosphate dehydrogenase [NAD(P)+].